A 428-amino-acid polypeptide reads, in one-letter code: Enolase 1 (428 aa).

Position 167 (Gln-167) interacts with (2R)-2-phosphoglycerate. The active-site Proton donor is the Glu-209. The Mg(2+) site is built by Asp-246, Glu-288, and Asp-315. The (2R)-2-phosphoglycerate site is built by Lys-340, Arg-369, Ser-370, and Lys-391. Lys-340 serves as the catalytic Proton acceptor.

Belongs to the enolase family. Component of the RNA degradosome, a multiprotein complex involved in RNA processing and mRNA degradation. The cofactor is Mg(2+).

It is found in the cytoplasm. The protein resides in the secreted. The protein localises to the cell surface. It carries out the reaction (2R)-2-phosphoglycerate = phosphoenolpyruvate + H2O. The protein operates within carbohydrate degradation; glycolysis; pyruvate from D-glyceraldehyde 3-phosphate: step 4/5. Catalyzes the reversible conversion of 2-phosphoglycerate (2-PG) into phosphoenolpyruvate (PEP). It is essential for the degradation of carbohydrates via glycolysis. This chain is Enolase 1, found in Pseudomonas syringae pv. tomato (strain ATCC BAA-871 / DC3000).